The following is a 288-amino-acid chain: Elongation factor Ts (288 aa).

An involved in Mg(2+) ion dislocation from EF-Tu region spans residues 79 to 82 (TDFV).

Belongs to the EF-Ts family.

It localises to the cytoplasm. Its function is as follows. Associates with the EF-Tu.GDP complex and induces the exchange of GDP to GTP. It remains bound to the aminoacyl-tRNA.EF-Tu.GTP complex up to the GTP hydrolysis stage on the ribosome. The polypeptide is Elongation factor Ts (Ehrlichia chaffeensis (strain ATCC CRL-10679 / Arkansas)).